A 255-amino-acid polypeptide reads, in one-letter code: Small ribosomal subunit protein uS2 (255 aa).

This sequence belongs to the universal ribosomal protein uS2 family.

The sequence is that of Small ribosomal subunit protein uS2 from Streptococcus pyogenes serotype M3 (strain ATCC BAA-595 / MGAS315).